The chain runs to 255 residues: Small ribosomal subunit protein uS2 (255 aa).

A disordered region spans residues 230 to 255 (QGSSGRDLGASSEVPVEPALEEAAEG).

The protein belongs to the universal ribosomal protein uS2 family.

This chain is Small ribosomal subunit protein uS2, found in Rhizobium johnstonii (strain DSM 114642 / LMG 32736 / 3841) (Rhizobium leguminosarum bv. viciae).